A 551-amino-acid chain; its full sequence is Endolytic murein transglycosylase (551 aa).

The Cytoplasmic portion of the chain corresponds to 1–187 (MSEKSREEEK…PKKEKKSHVK (187 aa)). The segment at 38-180 (VRTPANEPSA…EGAKPAKPKK (143 aa)) is disordered. 2 stretches are compositionally biased toward low complexity: residues 100 to 110 (PSSPAEESGSR) and 145 to 157 (QAGP…ATET). The span at 159-174 (DIIRDTSRRSRREGAK) shows a compositional bias: basic and acidic residues. The chain crosses the membrane as a helical span at residues 188–208 (AFVISFLVFLALLSAGGYFGY). Residues 209–551 (QYVLDSLLPI…VAEHVNSKLN (343 aa)) lie on the Extracellular side of the membrane.

This sequence belongs to the transglycosylase MltG family.

It is found in the cell membrane. The catalysed reaction is a peptidoglycan chain = a peptidoglycan chain with N-acetyl-1,6-anhydromuramyl-[peptide] at the reducing end + a peptidoglycan chain with N-acetylglucosamine at the non-reducing end.. Functionally, functions as a peptidoglycan terminase that cleaves nascent peptidoglycan strands endolytically to terminate their elongation. Involved in peripheral peptidoglycan (PG) synthesis. This Streptococcus pneumoniae serotype 2 (strain D39 / NCTC 7466) protein is Endolytic murein transglycosylase.